The chain runs to 151 residues: UPF0208 membrane protein YfbV (151 aa).

2 consecutive transmembrane segments (helical) span residues 46–65 (FGIR…QIAL) and 69–91 (LGPA…WWLG).

The protein belongs to the UPF0208 family.

Its subcellular location is the cell inner membrane. This is UPF0208 membrane protein YfbV (yfbV) from Photorhabdus temperata.